The sequence spans 357 residues: Peptide chain release factor 1 (357 aa).

An N5-methylglutamine modification is found at Gln-232.

It belongs to the prokaryotic/mitochondrial release factor family. In terms of processing, methylated by PrmC. Methylation increases the termination efficiency of RF1.

It is found in the cytoplasm. In terms of biological role, peptide chain release factor 1 directs the termination of translation in response to the peptide chain termination codons UAG and UAA. This Maridesulfovibrio salexigens (strain ATCC 14822 / DSM 2638 / NCIMB 8403 / VKM B-1763) (Desulfovibrio salexigens) protein is Peptide chain release factor 1.